A 380-amino-acid chain; its full sequence is tRNA(Met) cytidine acetate ligase (380 aa).

Residues 7 to 20 (ITEY…HLYH), glycine 100, asparagine 153, and arginine 178 contribute to the ATP site.

Belongs to the TmcAL family.

The protein localises to the cytoplasm. It catalyses the reaction cytidine(34) in elongator tRNA(Met) + acetate + ATP = N(4)-acetylcytidine(34) in elongator tRNA(Met) + AMP + diphosphate. In terms of biological role, catalyzes the formation of N(4)-acetylcytidine (ac(4)C) at the wobble position of elongator tRNA(Met), using acetate and ATP as substrates. First activates an acetate ion to form acetyladenylate (Ac-AMP) and then transfers the acetyl group to tRNA to form ac(4)C34. The polypeptide is tRNA(Met) cytidine acetate ligase (Staphylococcus haemolyticus (strain JCSC1435)).